A 249-amino-acid polypeptide reads, in one-letter code: Diaminopimelate epimerase (249 aa).

Substrate-binding residues include N11 and N60. C69 (proton donor) is an active-site residue. Substrate contacts are provided by residues 70–71 (GN), N164, and 182–183 (ER). Catalysis depends on C192, which acts as the Proton acceptor. Substrate is bound at residue 193-194 (GT).

Belongs to the diaminopimelate epimerase family. Homodimer.

The protein resides in the cytoplasm. It catalyses the reaction (2S,6S)-2,6-diaminopimelate = meso-2,6-diaminopimelate. It participates in amino-acid biosynthesis; L-lysine biosynthesis via DAP pathway; DL-2,6-diaminopimelate from LL-2,6-diaminopimelate: step 1/1. Functionally, catalyzes the stereoinversion of LL-2,6-diaminopimelate (L,L-DAP) to meso-diaminopimelate (meso-DAP), a precursor of L-lysine and an essential component of the bacterial peptidoglycan. This is Diaminopimelate epimerase from Campylobacter jejuni subsp. jejuni serotype O:23/36 (strain 81-176).